Reading from the N-terminus, the 242-residue chain is Octanoyltransferase (242 aa).

The 176-residue stretch at 31–206 (SQTTDEIWFL…LFLKNFGYNQ (176 aa)) folds into the BPL/LPL catalytic domain. Substrate-binding positions include 70 to 77 (RGGQVTYH), 137 to 139 (SIG), and 150 to 152 (GLA). The active-site Acyl-thioester intermediate is the Cys168.

It belongs to the LipB family.

It localises to the cytoplasm. The enzyme catalyses octanoyl-[ACP] + L-lysyl-[protein] = N(6)-octanoyl-L-lysyl-[protein] + holo-[ACP] + H(+). It functions in the pathway protein modification; protein lipoylation via endogenous pathway; protein N(6)-(lipoyl)lysine from octanoyl-[acyl-carrier-protein]: step 1/2. In terms of biological role, catalyzes the transfer of endogenously produced octanoic acid from octanoyl-acyl-carrier-protein onto the lipoyl domains of lipoate-dependent enzymes. Lipoyl-ACP can also act as a substrate although octanoyl-ACP is likely to be the physiological substrate. The sequence is that of Octanoyltransferase from Coxiella burnetii (strain Dugway 5J108-111).